We begin with the raw amino-acid sequence, 309 residues long: Homoserine O-succinyltransferase (309 aa).

Catalysis depends on cysteine 142, which acts as the Acyl-thioester intermediate. Substrate is bound by residues lysine 163 and serine 192. Histidine 235 (proton acceptor) is an active-site residue. The active site involves glutamate 237. Residue arginine 249 participates in substrate binding.

The protein belongs to the MetA family. Homodimer.

The protein resides in the cytoplasm. It catalyses the reaction L-homoserine + succinyl-CoA = O-succinyl-L-homoserine + CoA. Its pathway is amino-acid biosynthesis; L-methionine biosynthesis via de novo pathway; O-succinyl-L-homoserine from L-homoserine: step 1/1. Transfers a succinyl group from succinyl-CoA to L-homoserine, forming succinyl-L-homoserine. In Escherichia fergusonii (strain ATCC 35469 / DSM 13698 / CCUG 18766 / IAM 14443 / JCM 21226 / LMG 7866 / NBRC 102419 / NCTC 12128 / CDC 0568-73), this protein is Homoserine O-succinyltransferase.